The following is a 330-amino-acid chain: Aspartate--ammonia ligase (330 aa).

The protein belongs to the class-II aminoacyl-tRNA synthetase family. AsnA subfamily.

The protein localises to the cytoplasm. The catalysed reaction is L-aspartate + NH4(+) + ATP = L-asparagine + AMP + diphosphate + H(+). It functions in the pathway amino-acid biosynthesis; L-asparagine biosynthesis; L-asparagine from L-aspartate (ammonia route): step 1/1. This is Aspartate--ammonia ligase from Photorhabdus laumondii subsp. laumondii (strain DSM 15139 / CIP 105565 / TT01) (Photorhabdus luminescens subsp. laumondii).